A 197-amino-acid chain; its full sequence is Prefoldin subunit 3 (197 aa).

Residues 1–26 (MASLALRGSSENPAPTKDTTTNPRGI) form a disordered region. A compositionally biased stretch (polar residues) spans 9–23 (SSENPAPTKDTTTNP).

This sequence belongs to the prefoldin subunit alpha family. Heterohexamer of two PFD-alpha type and four PFD-beta type subunits.

In terms of biological role, prefoldin subunit; part of the gene cluster that mediates the biosynthesis of elsinochromes, pigments consisting of at least four interconvertible tautomers (A, B, C and D) that have a core phenolic quinone to which various side chains are attached and which play an important role in fungal pathogenesis. The non-reducing polyketide synthase PKS1 was proposed to iteratively catalyze decarboxylation between acetyl-CoA and malonyl-CoA subunits for polyketide chain elongation. The released polyketide undergoes cyclization to form an aromatic ring, and proceeds via serial modification steps to produce the heptaketide back- bone of elsinochrome. As elsinochrome has a symmetrical structure, two identical heptaketides are fused to form a core 1,2-dihydrobenzo-perylene ring structure, which can then be successively modified to produce the various derivatives of elsinochrome. Some of these reactions may be cooperatively carried out, at least in part, by the products of RDT1, OXR1 and PKS1. PRF1, embedded within the elsinochrome cluster possibly functions to stabilize some of the biosynthetic enzymes required for elsinochrome production. As prefoldin is a hexamer containing 2 a and 4 b subunits, additional prefoldin subunits, whose coding genes may not immediately link to the elsinochrome biosynthetic gene cluster, are required to fulfill the chaperone function. In addition, no methyltransferase-coding gene exists within the biosynthetic gene cluster, even though elsinochrome has four methyl groups at positions C3, C7, C8 and C12. Apparently, the identified gene cluster does not contain the entire entourage of genes responsible for elsinochrome biosynthesis. Once elsinochrome is synthesized, it must be exported outside the fungal cells, which is probably accomplished by the ECT1 transporter, to avoid toxicity. This chain is Prefoldin subunit 3, found in Elsinoe fawcettii (Citrus scab fungus).